Consider the following 429-residue polypeptide: DNA primase DnaG (429 aa).

The Toprim domain occupies 172 to 246 (DSIIVVEGRN…DVDFIARAPP (75 aa)). Positions 178, 220, and 222 each coordinate Mg(2+). The disordered stretch occupies residues 287–322 (RNTKELEERQGNELKNERPEKINENEESEKNVELKE).

It belongs to the archaeal DnaG primase family. As to quaternary structure, forms a ternary complex with MCM helicase and DNA. Component of the archaeal exosome complex. The cofactor is Mg(2+).

The enzyme catalyses ssDNA + n NTP = ssDNA/pppN(pN)n-1 hybrid + (n-1) diphosphate.. RNA polymerase that catalyzes the synthesis of short RNA molecules used as primers for DNA polymerase during DNA replication. Also part of the exosome, which is a complex involved in RNA degradation. Acts as a poly(A)-binding protein that enhances the interaction between heteromeric, adenine-rich transcripts and the exosome. This chain is DNA primase DnaG, found in Picrophilus torridus (strain ATCC 700027 / DSM 9790 / JCM 10055 / NBRC 100828 / KAW 2/3).